Reading from the N-terminus, the 222-residue chain is Peroxisomal membrane protein 11-4 (222 aa).

The Cytoplasmic portion of the chain corresponds to 1–81 (MSAGDTLDKL…LNGLRRAPGE (81 aa)). Residues 82-102 (FGALAVLANAGEMVYFFFDHF) traverse the membrane as a helical segment. The Lumenal segment spans residues 103–196 (TWLSRVGVLD…IGIADIEPNP (94 aa)). A helical transmembrane segment spans residues 197 to 217 (FCNHAVTLGISGLVSAWAGWY). The Cytoplasmic segment spans residues 218-222 (RNWPS).

Belongs to the peroxin-11 family. As to expression, expressed in seedlings, shoots, leaf sheaths and flag leaf.

It localises to the peroxisome membrane. Involved in peroxisomal proliferation. The polypeptide is Peroxisomal membrane protein 11-4 (PEX11-4) (Oryza sativa subsp. indica (Rice)).